The primary structure comprises 247 residues: Probable transcriptional regulatory protein YebC (247 aa).

Residues 1-20 (MAGHSKWANTRHRKAAQDAK) form a disordered region.

It belongs to the TACO1 family.

The protein localises to the cytoplasm. This is Probable transcriptional regulatory protein YebC from Salmonella arizonae (strain ATCC BAA-731 / CDC346-86 / RSK2980).